The sequence spans 392 residues: Fasciculation and elongation protein zeta-1 (392 aa).

Residues 1 to 36 (MEAPLVSLDEEFEDIRPSCTEEPEEKPQCLYGTSPH) form a disordered region. Phosphoserine is present on Ser-58. The interval 175–196 (MQNSPDPEEEEEVLEEEDGGEI) is disordered. Positions 180-194 (DPEEEEEVLEEEDGG) are enriched in acidic residues. The stretch at 230 to 298 (SELTELLDRV…KKRRKEKGLS (69 aa)) forms a coiled coil. A phosphoserine mark is found at Ser-298 and Ser-316.

The protein belongs to the zygin family. Homodimer. Interacts with the NH2-terminal variable region (V1) of PKC zeta and weakly with that of PKC epsilon. Interacts with UBE4B and SAP30L. Interacts with SCOC and ULK1; SCOC interferes with ULK1-binding to FEZ1. Directly interacts with SCOC and UVRAG. Stabilizes the interaction between SCOC and UVRAG during amino acid starvation. Phosphorylated by protein kinase C zeta; which enhances interaction with UBE4B and polyubiquitination. In terms of processing, polyubiquitinated in a UBE4B-dependent manner; which does not lead to proteasomal degradation and may be important for neurogenic activity. Polyubiquitin linkage seems to be mainly through Lys-26.

It localises to the cytoplasm. It is found in the cytoskeleton. Its subcellular location is the microtubule organizing center. The protein localises to the centrosome. The protein resides in the cell membrane. May be involved in axonal outgrowth as component of the network of molecules that regulate cellular morphology and axon guidance machinery. May participate in the transport of mitochondria and other cargos along microtubules. The sequence is that of Fasciculation and elongation protein zeta-1 (Fez1) from Mus musculus (Mouse).